A 759-amino-acid chain; its full sequence is 5-methyltetrahydropteroyltriglutamate--homocysteine methyltransferase (759 aa).

A compositionally biased stretch (polar residues) spans 1–16 (MTQPVRRQPFTATITG). The interval 1–22 (MTQPVRRQPFTATITGSPRIGP) is disordered. Residues 24–27 (RELK) and K118 contribute to the 5-methyltetrahydropteroyltri-L-glutamate site. L-homocysteine is bound by residues 437 to 439 (IGS) and E490. L-methionine-binding positions include 437-439 (IGS) and E490. 5-methyltetrahydropteroyltri-L-glutamate contacts are provided by residues 521–522 (RC) and W567. D605 is a binding site for L-homocysteine. An L-methionine-binding site is contributed by D605. Residue E611 coordinates 5-methyltetrahydropteroyltri-L-glutamate. Residues H647, C649, and E671 each contribute to the Zn(2+) site. H700 (proton donor) is an active-site residue. A Zn(2+)-binding site is contributed by C732.

It belongs to the vitamin-B12 independent methionine synthase family. Zn(2+) is required as a cofactor.

The catalysed reaction is 5-methyltetrahydropteroyltri-L-glutamate + L-homocysteine = tetrahydropteroyltri-L-glutamate + L-methionine. Its pathway is amino-acid biosynthesis; L-methionine biosynthesis via de novo pathway; L-methionine from L-homocysteine (MetE route): step 1/1. Functionally, catalyzes the transfer of a methyl group from 5-methyltetrahydrofolate to homocysteine resulting in methionine formation. This chain is 5-methyltetrahydropteroyltriglutamate--homocysteine methyltransferase, found in Mycobacterium tuberculosis (strain ATCC 25177 / H37Ra).